An 836-amino-acid chain; its full sequence is Sucrose synthase 5 (836 aa).

Residues 270–748 (RIFNVVIFSV…GLQRINECYT (479 aa)) are GT-B glycosyltransferase. The interval 805 to 836 (PPPLPPKPLVKPSASKGSKRTQPRLSFRLFGA) is disordered.

The protein belongs to the glycosyltransferase 1 family. Plant sucrose synthase subfamily. Detected in the whole plant but more precisely confined to the vasculature in cotyledons, leaves, petals, anthers and roots. Also detected in developing siliques, young immature rosette and cauline leaves.

The protein resides in the secreted. It localises to the cell wall. It catalyses the reaction an NDP-alpha-D-glucose + D-fructose = a ribonucleoside 5'-diphosphate + sucrose + H(+). Its function is as follows. Sucrose-cleaving enzyme that provides UDP-glucose and fructose for various metabolic pathways. Functions in callose synthesis at the site of phloem sieve elements. The chain is Sucrose synthase 5 (SUS5) from Arabidopsis thaliana (Mouse-ear cress).